Here is a 686-residue protein sequence, read N- to C-terminus: Bromodomain-containing factor 1 (686 aa).

Disordered regions lie at residues 1-69 (MTDI…PAGL) and 85-150 (NGYN…NPIP). Residues 9 to 25 (NDVDVNGNNVNDDVSSN) show a composition bias toward low complexity. Residues 99–120 (QGLKKEEGGQGTKQEDLDENSK) are compositionally biased toward basic and acidic residues. Residues 130–139 (EPAPAPPPEP) are compositionally biased toward pro residues. The Bromo 1 domain occupies 145-254 (PQNPIPKHQQ…ASFEKHMLNM (110 aa)). A Phosphoserine modification is found at Ser-270. The segment at 283-304 (QTHNGRPKRTIHPPKSKDIYPY) is disordered. The segment covering 287 to 296 (GRPKRTIHPP) has biased composition (basic residues). A Bromo 2 domain is found at 312–421 (KRLQQAMKFC…EVFNSKWADR (110 aa)). 4 disordered regions span residues 424–447 (LDDY…SEYS), 486–523 (IRKE…KKNK), 594–636 (SSGA…EQSR), and 649–686 (DSAS…SEEE). Ser-429 carries the post-translational modification Phosphoserine. Acidic residues predominate over residues 438–447 (DYDDYESEYS). A coiled-coil region spans residues 460–499 (AIQYLEEQLARMKVELQQLKKQELEKIRKERRLARGSKKR). Positions 488–507 (KERRLARGSKKRGKRSKGRS) are enriched in basic residues. In terms of domain architecture, NET spans 518–598 (RDKKNKLKTV…RQYESSSGAS (81 aa)). Composition is skewed to polar residues over residues 594 to 620 (SSGA…TSAG) and 652 to 671 (SPLS…HNGF). Ser-615 and Ser-659 each carry phosphoserine. Over residues 675-686 (SDDDVSSESEEE) the composition is skewed to acidic residues.

This sequence belongs to the BET family. In terms of assembly, interacts with the TFIID subunit TAF7 and with acetylated histones H3 and H4. In terms of processing, phosphorylated by the casein kinase CK2 complex.

It localises to the nucleus. Its function is as follows. Transcription factor involved in the expression of a broad class of genes including snRNAs. Required for sporulation and DNA-damage repair. Prevents the spreading of SIR silencing at telomeres and protects histone H4, but not H3, from deacetylation. This is Bromodomain-containing factor 1 (BDF1) from Saccharomyces cerevisiae (strain ATCC 204508 / S288c) (Baker's yeast).